Reading from the N-terminus, the 135-residue chain is Large ribosomal subunit protein uL16c (135 aa).

The protein belongs to the universal ribosomal protein uL16 family. As to quaternary structure, part of the 50S ribosomal subunit.

The protein resides in the plastid. Its subcellular location is the chloroplast. The chain is Large ribosomal subunit protein uL16c from Gossypium hirsutum (Upland cotton).